The primary structure comprises 63 residues: uncharacterized protein (63 aa).

The helical transmembrane segment at 4-24 (LNQFILIFLLLIVILFIFFLI) threads the bilayer.

The protein resides in the membrane. This is an uncharacterized protein from Invertebrate iridescent virus 6 (IIV-6).